The following is a 462-amino-acid chain: MFSSIKDILENPILNSNVTINGWIRTKRSNGKIGFIEINDGSTLKGIQAVINEEENQFTEKDLKKLTTGASISLTGLLVESPAKGQNYEIKIYSFNVIGEADSKTYPLQKKRHTFEFLREIPHLRIRTNTFGAIARVRNKISYKIHEYFQKNGFFYINTPIITSNDGEGAGEMFRVSTLKFNKPNNSLSNIDFKDDFFGKEAFLSVTGQLHGEAYAMALSKIYTFGPTFRAENSNTTRHASEFWMIEPEMAFYKLNDNISLAEDLLKYLLSSILNECSQDMDFLENYIEKGLIKKLENVINSNFEVITYTKAIEILESSKKNFEIKPCWGIDLQTDHERYLTEEIFKKPIAVIDYPKNFKAFYMKINKDNKTVKGMDILVPRIGEIIGGSEREDDLQKLENRIKELNLNIEHLNWYLDLRRFGSTPHSGFGLGLERLVQYTTGISNIRDSIPFPRTPKNLYF.

The protein belongs to the class-II aminoacyl-tRNA synthetase family. As to quaternary structure, homodimer.

It localises to the cytoplasm. The catalysed reaction is tRNA(Asn) + L-asparagine + ATP = L-asparaginyl-tRNA(Asn) + AMP + diphosphate + H(+). The chain is Asparagine--tRNA ligase from Borrelia garinii subsp. bavariensis (strain ATCC BAA-2496 / DSM 23469 / PBi) (Borreliella bavariensis).